The following is a 305-amino-acid chain: Protoheme IX farnesyltransferase (305 aa).

9 consecutive transmembrane segments (helical) span residues 31–51, 52–72, 96–118, 123–145, 151–171, 179–199, 225–245, 247–267, and 281–301; these read VISL…YSVH, PFIA…AGAI, VIES…FFMA, LLAS…IWLK, NIVI…AAVS, IILF…LALF, ILIY…IGMN, FIYL…AGSL, and FAYS…TNTI.

This sequence belongs to the UbiA prenyltransferase family. Protoheme IX farnesyltransferase subfamily.

It is found in the cell inner membrane. It catalyses the reaction heme b + (2E,6E)-farnesyl diphosphate + H2O = Fe(II)-heme o + diphosphate. Its pathway is porphyrin-containing compound metabolism; heme O biosynthesis; heme O from protoheme: step 1/1. In terms of biological role, converts heme B (protoheme IX) to heme O by substitution of the vinyl group on carbon 2 of heme B porphyrin ring with a hydroxyethyl farnesyl side group. This is Protoheme IX farnesyltransferase from Rickettsia massiliae (strain Mtu5).